Here is a 292-residue protein sequence, read N- to C-terminus: Elongation factor Ts (292 aa).

An involved in Mg(2+) ion dislocation from EF-Tu region spans residues 80 to 83 (TDFV).

This sequence belongs to the EF-Ts family.

It is found in the cytoplasm. Its function is as follows. Associates with the EF-Tu.GDP complex and induces the exchange of GDP to GTP. It remains bound to the aminoacyl-tRNA.EF-Tu.GTP complex up to the GTP hydrolysis stage on the ribosome. The protein is Elongation factor Ts of Ralstonia nicotianae (strain ATCC BAA-1114 / GMI1000) (Ralstonia solanacearum).